The sequence spans 242 residues: NAD-dependent protein deacetylase (242 aa).

In terms of domain architecture, Deacetylase sirtuin-type spans 1–242 (MQQFEEVRTI…EFVEGLSSIK (242 aa)). The NAD(+) site is built by Ala-23, Thr-27, Phe-34, Arg-35, Gln-102, Ile-104, Asp-105, and His-120. Phe-34 is a nicotinamide binding site. Ile-104 and Asp-105 together coordinate nicotinamide. His-120 functions as the Proton acceptor in the catalytic mechanism. The Zn(2+) site is built by Cys-128, Cys-131, Cys-148, and Cys-151. Thr-187, Ser-188, Asn-213, and Ile-231 together coordinate NAD(+).

It belongs to the sirtuin family. Class U subfamily. Requires Zn(2+) as cofactor.

It is found in the cytoplasm. The enzyme catalyses N(6)-acetyl-L-lysyl-[protein] + NAD(+) + H2O = 2''-O-acetyl-ADP-D-ribose + nicotinamide + L-lysyl-[protein]. NAD-dependent protein deacetylase which modulates the activities of several enzymes which are inactive in their acetylated form. This chain is NAD-dependent protein deacetylase, found in Bacillus anthracis.